A 539-amino-acid chain; its full sequence is Putative cysteine ligase BshC (539 aa).

Residues 455-475 adopt a coiled-coil conformation; the sequence is LQKNAAFIQDQLLFLERTVTK.

This sequence belongs to the BshC family.

Involved in bacillithiol (BSH) biosynthesis. May catalyze the last step of the pathway, the addition of cysteine to glucosamine malate (GlcN-Mal) to generate BSH. The protein is Putative cysteine ligase BshC of Bacillus velezensis (strain DSM 23117 / BGSC 10A6 / LMG 26770 / FZB42) (Bacillus amyloliquefaciens subsp. plantarum).